Reading from the N-terminus, the 271-residue chain is Putative pyruvate, phosphate dikinase regulatory protein (271 aa).

ADP is bound at residue 150–157 (GVSRTSKT).

It belongs to the pyruvate, phosphate/water dikinase regulatory protein family. PDRP subfamily.

The enzyme catalyses N(tele)-phospho-L-histidyl/L-threonyl-[pyruvate, phosphate dikinase] + ADP = N(tele)-phospho-L-histidyl/O-phospho-L-threonyl-[pyruvate, phosphate dikinase] + AMP + H(+). The catalysed reaction is N(tele)-phospho-L-histidyl/O-phospho-L-threonyl-[pyruvate, phosphate dikinase] + phosphate + H(+) = N(tele)-phospho-L-histidyl/L-threonyl-[pyruvate, phosphate dikinase] + diphosphate. Bifunctional serine/threonine kinase and phosphorylase involved in the regulation of the pyruvate, phosphate dikinase (PPDK) by catalyzing its phosphorylation/dephosphorylation. This is Putative pyruvate, phosphate dikinase regulatory protein from Oceanobacillus iheyensis (strain DSM 14371 / CIP 107618 / JCM 11309 / KCTC 3954 / HTE831).